Here is a 278-residue protein sequence, read N- to C-terminus: Para-Rep C1 (278 aa).

The CRESS-DNA virus Rep endonuclease domain maps to Met1 to Leu95. The RCR-1 motif lies at Phe8–Asn11. A divalent metal cation-binding residues include Glu33 and His39. Positions His39 to Gln41 match the RCR-2 motif. A Nuclear localization signal motif is present at residues Lys48–Lys69. The active-site For DNA cleavage activity is Tyr78. The RCR-3 signature appears at Tyr78–Lys81. Glu83 contributes to the a divalent metal cation binding site. The short motif at Leu95–His101 is the Nuclear localization signal element. An ATP-binding site is contributed by Gly176–Ser178.

The protein belongs to the nanoviridea/circoviridae replication-associated protein family. In terms of assembly, homooligomer (Potential). Rep binds to repeated DNA motifs (iterons). Requires Mg(2+) as cofactor. Mn(2+) serves as cofactor.

It localises to the host nucleus. It catalyses the reaction ATP + H2O = ADP + phosphate + H(+). In terms of biological role, initiates and terminates the replication only of its own subviral DNA molecule. The closed circular ssDNA genome is first converted to a superhelical dsDNA. Rep binds a specific hairpin at the genome origin of replication. Introduces an endonucleolytic nick within the intergenic region of the genome, thereby initiating the rolling circle replication (RCR). Following cleavage, binds covalently to the 5'-phosphate of DNA as a tyrosyl ester. The cleavage gives rise to a free 3'-OH that serves as a primer for the cellular DNA polymerase. The polymerase synthesizes the (+) strand DNA by rolling circle mechanism. After one round of replication, a Rep-catalyzed nucleotidyl transfer reaction releases a circular single-stranded virus genome, thereby terminating the replication. Displays origin-specific DNA cleavage, nucleotidyl transferase, ATPase and helicase activities. This chain is Para-Rep C1 (C1), found in Faba bean necrotic yellows C1 alphasatellite (FBNYC1A).